We begin with the raw amino-acid sequence, 962 residues long: Vacuolar membrane protease (962 aa).

At 1 to 15 (MVSSRRGFNPIAFTP) the chain is on the cytoplasmic side. The chain crosses the membrane as a helical span at residues 16–36 (WPVTILSSLVYLALIIPIIVV). Residues 37–390 (HHLVPPAPKE…FQLNTLFGHS (354 aa)) are Vacuolar-facing. 2 N-linked (GlcNAc...) asparagine glycosylation sites follow: asparagine 110 and asparagine 113. Positions 169 and 181 each coordinate Zn(2+). The active-site Proton acceptor is glutamate 215. 3 residues coordinate Zn(2+): glutamate 216, glutamate 241, and histidine 314. The helical transmembrane segment at 391–411 (VALLVVAPLLLIITSVALFAV) threads the bilayer. Residues 412 to 440 (DKMYMFSMYTYISESGGQVSLYGLRGMFR) are Cytoplasmic-facing. A helical transmembrane segment spans residues 441-461 (FPLILGISTALTIALAFLIMK). The Vacuolar segment spans residues 462-472 (VNPFIIYSSPY). A helical transmembrane segment spans residues 473–493 (AVWSMMLSTCMFFAWFISCVA). Topologically, residues 494 to 503 (DFARPSALHR) are cytoplasmic. A helical transmembrane segment spans residues 504–524 (AYSFSWMFGIMWVFLVIATVY). The Vacuolar portion of the chain corresponds to 525–534 (QKQHGIASSY). The helical transmembrane segment at 535-555 (FIVFYFAGVAVATWISYLELF) threads the bilayer. Over 556–667 (GLPKTQDYAR…WSIYLMSSAW (112 aa)) the chain is Cytoplasmic. A disordered region spans residues 568–617 (GRLSDRTPSSDSHFLAPSADELPSSSSAAGRDFNPEDVEDEEPTESTSLL). Acidic residues predominate over residues 602 to 611 (PEDVEDEEPT). Residues 668-688 (ILQFLLVAPIVIILLGQLGLF) traverse the membrane as a helical segment. Residues 689–704 (LTSATYQIGADGGSQL) are Vacuolar-facing. The chain crosses the membrane as a helical span at residues 705-725 (VIYIGIAVLSVLILLPLFPFI). Residues 726 to 731 (HRFTYH) lie on the Cytoplasmic side of the membrane. Residues 732 to 752 (IPTFLLFILIGTLVYNLTAFP) traverse the membrane as a helical segment. At 753 to 962 (FSHSNRLKLA…LVEGSYSFKL (210 aa)) the chain is on the vacuolar side. A glycan (N-linked (GlcNAc...) asparagine) is linked at asparagine 834.

The protein belongs to the peptidase M28 family. It depends on Zn(2+) as a cofactor.

It is found in the vacuole membrane. May be involved in vacuolar sorting and osmoregulation. The protein is Vacuolar membrane protease of Arthroderma benhamiae (strain ATCC MYA-4681 / CBS 112371) (Trichophyton mentagrophytes).